The chain runs to 473 residues: Photosystem II CP43 reaction center protein (473 aa).

Residues 1-14 constitute a propeptide that is removed on maturation; that stretch reads MKTLYSPRRFYPVE. The residue at position 15 (T15) is an N-acetylthreonine. T15 bears the Phosphothreonine mark. Helical transmembrane passes span 69–93, 134–155, 178–200, 255–275, and 291–312; these read LFEV…PHLA, LIGP…KDRN, KALF…RKIT, KPFA…LSYS, and WFNN…ASQA. E367 is a binding site for [CaMn4O5] cluster. The chain crosses the membrane as a helical span at residues 447–471; sequence RARAAAAGFEKGIDRDLEPVLFMTP.

It belongs to the PsbB/PsbC family. PsbC subfamily. As to quaternary structure, PSII is composed of 1 copy each of membrane proteins PsbA, PsbB, PsbC, PsbD, PsbE, PsbF, PsbH, PsbI, PsbJ, PsbK, PsbL, PsbM, PsbT, PsbX, PsbY, PsbZ, Psb30/Ycf12, at least 3 peripheral proteins of the oxygen-evolving complex and a large number of cofactors. It forms dimeric complexes. Binds multiple chlorophylls and provides some of the ligands for the Ca-4Mn-5O cluster of the oxygen-evolving complex. It may also provide a ligand for a Cl- that is required for oxygen evolution. PSII binds additional chlorophylls, carotenoids and specific lipids. serves as cofactor.

The protein resides in the plastid. It localises to the chloroplast thylakoid membrane. Its function is as follows. One of the components of the core complex of photosystem II (PSII). It binds chlorophyll and helps catalyze the primary light-induced photochemical processes of PSII. PSII is a light-driven water:plastoquinone oxidoreductase, using light energy to abstract electrons from H(2)O, generating O(2) and a proton gradient subsequently used for ATP formation. In Gnetum parvifolium (Small-leaved jointfir), this protein is Photosystem II CP43 reaction center protein.